The sequence spans 343 residues: L-threonine 3-dehydrogenase (343 aa).

Cys-38 is a binding site for Zn(2+). Active-site charge relay system residues include Thr-40 and His-43. 6 residues coordinate Zn(2+): His-63, Glu-64, Cys-93, Cys-96, Cys-99, and Cys-107. NAD(+) contacts are provided by residues Ile-175, Asp-195, Arg-200, 262–264, and 286–287; these read LGI and IY.

Belongs to the zinc-containing alcohol dehydrogenase family. In terms of assembly, homotetramer. Requires Zn(2+) as cofactor.

The protein resides in the cytoplasm. The catalysed reaction is L-threonine + NAD(+) = (2S)-2-amino-3-oxobutanoate + NADH + H(+). Its pathway is amino-acid degradation; L-threonine degradation via oxydo-reductase pathway; glycine from L-threonine: step 1/2. Its function is as follows. Catalyzes the NAD(+)-dependent oxidation of L-threonine to 2-amino-3-ketobutyrate. The chain is L-threonine 3-dehydrogenase from Paraburkholderia phytofirmans (strain DSM 17436 / LMG 22146 / PsJN) (Burkholderia phytofirmans).